We begin with the raw amino-acid sequence, 101 residues long: Small ribosomal subunit protein bS16 (101 aa).

It belongs to the bacterial ribosomal protein bS16 family.

The sequence is that of Small ribosomal subunit protein bS16 from Ureaplasma urealyticum serovar 10 (strain ATCC 33699 / Western).